The following is a 274-amino-acid chain: Hydroxyethylthiazole kinase (274 aa).

Residue Met-54 coordinates substrate. 2 residues coordinate ATP: Arg-129 and Thr-175. Gly-202 is a binding site for substrate.

It belongs to the Thz kinase family. The cofactor is Mg(2+).

The catalysed reaction is 5-(2-hydroxyethyl)-4-methylthiazole + ATP = 4-methyl-5-(2-phosphooxyethyl)-thiazole + ADP + H(+). It functions in the pathway cofactor biosynthesis; thiamine diphosphate biosynthesis; 4-methyl-5-(2-phosphoethyl)-thiazole from 5-(2-hydroxyethyl)-4-methylthiazole: step 1/1. In terms of biological role, catalyzes the phosphorylation of the hydroxyl group of 4-methyl-5-beta-hydroxyethylthiazole (THZ). This chain is Hydroxyethylthiazole kinase, found in Granulibacter bethesdensis (strain ATCC BAA-1260 / CGDNIH1).